A 791-amino-acid polypeptide reads, in one-letter code: Phenylalanine--tRNA ligase beta subunit (791 aa).

One can recognise a tRNA-binding domain in the interval 39 to 149; the sequence is GDEIQNVVTG…SDTAIGKDIK (111 aa). A B5 domain is found at 403 to 478; the sequence is IKERNLKVDS…RIYGYNNIPT (76 aa). Mg(2+) is bound by residues aspartate 456, aspartate 462, glutamate 465, and glutamate 466. The FDX-ACB domain maps to 698–791; that stretch reads PKFPAVDRDM…LENNLGAELR (94 aa).

It belongs to the phenylalanyl-tRNA synthetase beta subunit family. Type 1 subfamily. As to quaternary structure, tetramer of two alpha and two beta subunits. The cofactor is Mg(2+).

It is found in the cytoplasm. It carries out the reaction tRNA(Phe) + L-phenylalanine + ATP = L-phenylalanyl-tRNA(Phe) + AMP + diphosphate + H(+). The polypeptide is Phenylalanine--tRNA ligase beta subunit (Clostridium tetani (strain Massachusetts / E88)).